Reading from the N-terminus, the 244-residue chain is 6-carboxyhexanoate--CoA ligase (244 aa).

The protein belongs to the BioW family. In terms of assembly, homodimer. Mg(2+) serves as cofactor.

The catalysed reaction is heptanedioate + ATP + CoA = 6-carboxyhexanoyl-CoA + AMP + diphosphate. The protein operates within metabolic intermediate metabolism; pimeloyl-CoA biosynthesis; pimeloyl-CoA from pimelate: step 1/1. Functionally, catalyzes the transformation of pimelate into pimeloyl-CoA with concomitant hydrolysis of ATP to AMP. The chain is 6-carboxyhexanoate--CoA ligase from Methanococcus maripaludis (strain C7 / ATCC BAA-1331).